The following is a 557-amino-acid chain: Membrane protein insertase YidC (557 aa).

Helical transmembrane passes span 3–23, 363–383, 437–457, 476–496, and 507–527; these read IKRT…FDNW, FVGN…AVFF, LPVV…LASV, PYFI…KLNP, and MMFM…GLVL.

This sequence belongs to the OXA1/ALB3/YidC family. Type 1 subfamily. As to quaternary structure, interacts with the Sec translocase complex via SecD. Specifically interacts with transmembrane segments of nascent integral membrane proteins during membrane integration.

The protein localises to the cell inner membrane. In terms of biological role, required for the insertion and/or proper folding and/or complex formation of integral membrane proteins into the membrane. Involved in integration of membrane proteins that insert both dependently and independently of the Sec translocase complex, as well as at least some lipoproteins. Aids folding of multispanning membrane proteins. This is Membrane protein insertase YidC from Burkholderia thailandensis (strain ATCC 700388 / DSM 13276 / CCUG 48851 / CIP 106301 / E264).